Consider the following 117-residue polypeptide: MQNIPPQVQAMLGQLESYQQQLQLVIQQKQKVQADLNEAKKALEEIEKLTDDAVIYKTVGTLIVKTTKEKALQELKEKVETLEVRLNALNRQEQKINEKIKELTQKIQAALRPPTAG.

The protein belongs to the prefoldin subunit beta family. In terms of assembly, heterohexamer of two alpha and four beta subunits.

It localises to the cytoplasm. In terms of biological role, molecular chaperone capable of stabilizing a range of proteins. Seems to fulfill an ATP-independent, HSP70-like function in archaeal de novo protein folding. In Pyrococcus furiosus (strain ATCC 43587 / DSM 3638 / JCM 8422 / Vc1), this protein is Prefoldin subunit beta.